A 185-amino-acid polypeptide reads, in one-letter code: Bcl-2-modifying factor (185 aa).

A disordered region spans residues 1–28 (MEPPQCVEELEDDVFQSEDGEPGTQPGG). The segment covering 8 to 21 (EELEDDVFQSEDGE) has biased composition (acidic residues). Positions 67–75 (DKATQTLSP) are interaction with DLC2. Residues 134-148 (IARKLQCIADQFHRL) carry the BH3 motif.

The protein belongs to the Bcl-2 family. In terms of assembly, interacts with MCL1, BCL2, BCL2L1/BCL-Xl, BCL2A1 and BCL2L2/BCL-w. Interacts with the myosin V actin motor complex through its binding to DLC2. In terms of tissue distribution, widely expressed with an abundant expression in pancreas, liver kidney and hematopoietic tissues.

Functionally, may play a role in apoptosis. This chain is Bcl-2-modifying factor (Bmf), found in Mus musculus (Mouse).